The following is a 150-amino-acid chain: D-aminoacyl-tRNA deacylase (150 aa).

Positions 138-139 (GP) match the Gly-cisPro motif, important for rejection of L-amino acids motif.

This sequence belongs to the DTD family. Homodimer.

It is found in the cytoplasm. It carries out the reaction glycyl-tRNA(Ala) + H2O = tRNA(Ala) + glycine + H(+). The catalysed reaction is a D-aminoacyl-tRNA + H2O = a tRNA + a D-alpha-amino acid + H(+). An aminoacyl-tRNA editing enzyme that deacylates mischarged D-aminoacyl-tRNAs. Also deacylates mischarged glycyl-tRNA(Ala), protecting cells against glycine mischarging by AlaRS. Acts via tRNA-based rather than protein-based catalysis; rejects L-amino acids rather than detecting D-amino acids in the active site. By recycling D-aminoacyl-tRNA to D-amino acids and free tRNA molecules, this enzyme counteracts the toxicity associated with the formation of D-aminoacyl-tRNA entities in vivo and helps enforce protein L-homochirality. This Flavobacterium psychrophilum (strain ATCC 49511 / DSM 21280 / CIP 103535 / JIP02/86) protein is D-aminoacyl-tRNA deacylase.